Reading from the N-terminus, the 161-residue chain is Deoxyuridine 5'-triphosphate nucleotidohydrolase (161 aa).

Substrate is bound by residues 80–82 (RSG), asparagine 93, 97–99 (TVD), and lysine 107.

The protein belongs to the dUTPase family. It depends on Mg(2+) as a cofactor.

It catalyses the reaction dUTP + H2O = dUMP + diphosphate + H(+). It functions in the pathway pyrimidine metabolism; dUMP biosynthesis; dUMP from dCTP (dUTP route): step 2/2. This enzyme is involved in nucleotide metabolism: it produces dUMP, the immediate precursor of thymidine nucleotides and it decreases the intracellular concentration of dUTP so that uracil cannot be incorporated into DNA. This Mesorhizobium japonicum (strain LMG 29417 / CECT 9101 / MAFF 303099) (Mesorhizobium loti (strain MAFF 303099)) protein is Deoxyuridine 5'-triphosphate nucleotidohydrolase.